Consider the following 425-residue polypeptide: 3-phosphoshikimate 1-carboxyvinyltransferase (425 aa).

Residues Lys-20, Ser-21, and Arg-25 each contribute to the 3-phosphoshikimate site. Phosphoenolpyruvate is bound at residue Lys-20. Phosphoenolpyruvate-binding residues include Gly-92 and Arg-120. Residues Ser-165, Gln-167, Asp-312, and Lys-339 each contribute to the 3-phosphoshikimate site. A phosphoenolpyruvate-binding site is contributed by Gln-167. Asp-312 functions as the Proton acceptor in the catalytic mechanism. Phosphoenolpyruvate is bound by residues Arg-343 and Arg-385.

It belongs to the EPSP synthase family. Monomer.

It is found in the cytoplasm. The catalysed reaction is 3-phosphoshikimate + phosphoenolpyruvate = 5-O-(1-carboxyvinyl)-3-phosphoshikimate + phosphate. It functions in the pathway metabolic intermediate biosynthesis; chorismate biosynthesis; chorismate from D-erythrose 4-phosphate and phosphoenolpyruvate: step 6/7. Catalyzes the transfer of the enolpyruvyl moiety of phosphoenolpyruvate (PEP) to the 5-hydroxyl of shikimate-3-phosphate (S3P) to produce enolpyruvyl shikimate-3-phosphate and inorganic phosphate. This is 3-phosphoshikimate 1-carboxyvinyltransferase from Alkaliphilus metalliredigens (strain QYMF).